We begin with the raw amino-acid sequence, 224 residues long: tRNA (guanine-N(7)-)-methyltransferase (224 aa).

The S-adenosyl-L-methionine site is built by glutamate 45, glutamate 70, aspartate 97, and aspartate 119. Residue aspartate 119 is part of the active site. Substrate contacts are provided by residues lysine 123, aspartate 155, and 199 to 202 (TEYE).

Belongs to the class I-like SAM-binding methyltransferase superfamily. TrmB family.

The catalysed reaction is guanosine(46) in tRNA + S-adenosyl-L-methionine = N(7)-methylguanosine(46) in tRNA + S-adenosyl-L-homocysteine. It functions in the pathway tRNA modification; N(7)-methylguanine-tRNA biosynthesis. In terms of biological role, catalyzes the formation of N(7)-methylguanine at position 46 (m7G46) in tRNA. This is tRNA (guanine-N(7)-)-methyltransferase from Ureaplasma parvum serovar 3 (strain ATCC 27815 / 27 / NCTC 11736).